Here is a 200-residue protein sequence, read N- to C-terminus: NADH-quinone oxidoreductase subunit C (200 aa).

Belongs to the complex I 30 kDa subunit family. In terms of assembly, NDH-1 is composed of 14 different subunits. Subunits NuoB, C, D, E, F, and G constitute the peripheral sector of the complex.

The protein resides in the cell inner membrane. It carries out the reaction a quinone + NADH + 5 H(+)(in) = a quinol + NAD(+) + 4 H(+)(out). Functionally, NDH-1 shuttles electrons from NADH, via FMN and iron-sulfur (Fe-S) centers, to quinones in the respiratory chain. The immediate electron acceptor for the enzyme in this species is believed to be ubiquinone. Couples the redox reaction to proton translocation (for every two electrons transferred, four hydrogen ions are translocated across the cytoplasmic membrane), and thus conserves the redox energy in a proton gradient. This is NADH-quinone oxidoreductase subunit C from Burkholderia multivorans (strain ATCC 17616 / 249).